A 259-amino-acid chain; its full sequence is Small ribosomal subunit protein eS1 (259 aa).

At A2 the chain carries N-acetylalanine; partial.

It belongs to the eukaryotic ribosomal protein eS1 family. Component of the small ribosomal subunit. Mature ribosomes consist of a small (40S) and a large (60S) subunit. The 40S subunit contains about 33 different proteins and 1 molecule of RNA (18S). The 60S subunit contains about 49 different proteins and 3 molecules of RNA (25S, 5.8S and 5S).

The protein localises to the cytoplasm. In Cryptococcus neoformans var. neoformans serotype D (strain B-3501A) (Filobasidiella neoformans), this protein is Small ribosomal subunit protein eS1.